A 115-amino-acid polypeptide reads, in one-letter code: Large ribosomal subunit protein bL19 (115 aa).

The protein belongs to the bacterial ribosomal protein bL19 family.

In terms of biological role, this protein is located at the 30S-50S ribosomal subunit interface and may play a role in the structure and function of the aminoacyl-tRNA binding site. This chain is Large ribosomal subunit protein bL19, found in Desulforamulus reducens (strain ATCC BAA-1160 / DSM 100696 / MI-1) (Desulfotomaculum reducens).